The following is a 217-amino-acid chain: Cysteine-rich protein 3 (217 aa).

In terms of domain architecture, LIM zinc-binding 1 spans 3 to 64; sequence WTCPRCQQPV…KPCYGALFGP (62 aa). The tract at residues 84–112 is disordered; it reads PGCTTPLSPSSFSPPRPRTGLPQGKKSPP. One can recognise an LIM zinc-binding 2 domain in the interval 122-183; sequence SLCPGCGEPV…VPCYGYLFGP (62 aa).

In terms of tissue distribution, expressed in most tissues, but not in skeletal muscle.

It localises to the cytoplasm. This chain is Cysteine-rich protein 3 (CRIP3), found in Homo sapiens (Human).